The chain runs to 629 residues: Phosphomethylpyrimidine synthase (629 aa).

The disordered stretch occupies residues 1–24; sequence MSTKPKNAAHLSESAQVDSGSVQP. Residues 13 to 24 are compositionally biased toward polar residues; it reads ESAQVDSGSVQP. Substrate is bound by residues Asn233, Met262, Tyr291, His327, 347–349, 388–391, and Glu427; these read SRG and DGLR. Position 431 (His431) interacts with Zn(2+). Substrate is bound at residue Tyr454. His495 contributes to the Zn(2+) binding site. Positions 575, 578, and 583 each coordinate [4Fe-4S] cluster.

Belongs to the ThiC family. As to quaternary structure, homodimer. [4Fe-4S] cluster serves as cofactor.

The enzyme catalyses 5-amino-1-(5-phospho-beta-D-ribosyl)imidazole + S-adenosyl-L-methionine = 4-amino-2-methyl-5-(phosphooxymethyl)pyrimidine + CO + 5'-deoxyadenosine + formate + L-methionine + 3 H(+). The protein operates within cofactor biosynthesis; thiamine diphosphate biosynthesis. Catalyzes the synthesis of the hydroxymethylpyrimidine phosphate (HMP-P) moiety of thiamine from aminoimidazole ribotide (AIR) in a radical S-adenosyl-L-methionine (SAM)-dependent reaction. In Pseudomonas syringae pv. tomato (strain ATCC BAA-871 / DC3000), this protein is Phosphomethylpyrimidine synthase.